The sequence spans 65 residues: UPF0434 protein Mpe_A2486 (65 aa).

The protein belongs to the UPF0434 family.

The chain is UPF0434 protein Mpe_A2486 from Methylibium petroleiphilum (strain ATCC BAA-1232 / LMG 22953 / PM1).